The following is a 219-amino-acid chain: Carboxypeptidase Y inhibitor (219 aa).

An N-acetylmethionine modification is found at methionine 1.

The protein belongs to the phosphatidylethanolamine-binding protein family. As to quaternary structure, monomer.

The protein localises to the cytoplasm. Its function is as follows. Specific and potent inhibitor of carboxypeptidase Y. The sequence is that of Carboxypeptidase Y inhibitor (TFS1) from Saccharomyces cerevisiae (strain ATCC 204508 / S288c) (Baker's yeast).